The sequence spans 229 residues: MAKKKAFTPLFYLASIVFLPWWISFSVNKCLESWVTNWWNTGQSQIVLNNIQEKSLLEKFRELEELLFLDEMIKEYSETHLEEFGIGIHKETIQLITIQNENRMDTILHFSTNIIWFGILSGYSILGKEKLVILNSWAQEFLYNLSDTAKALCLLLVTEFFLGYHSPPGWEFAIRSIYNEVGVVANEQTITILVCILPVIFDTCFKYWLFRYLTSLSPSILLIYDSITE.

A run of 2 helical transmembrane segments spans residues 7 to 27 (FTPL…SFSV) and 107 to 127 (ILHF…SILG).

It belongs to the CemA family.

Its subcellular location is the plastid. The protein localises to the chloroplast inner membrane. The catalysed reaction is K(+)(in) + H(+)(out) = K(+)(out) + H(+)(in). Its function is as follows. Contributes to K(+)/H(+) antiport activity by supporting proton efflux to control proton extrusion and homeostasis in chloroplasts in a light-dependent manner to modulate photosynthesis. Prevents excessive induction of non-photochemical quenching (NPQ) under continuous-light conditions. Indirectly promotes efficient inorganic carbon uptake into chloroplasts. The sequence is that of Potassium/proton antiporter CemA from Solanum tuberosum (Potato).